Consider the following 146-residue polypeptide: Arginine repressor (146 aa).

Belongs to the ArgR family.

The protein localises to the cytoplasm. It participates in amino-acid biosynthesis; L-arginine biosynthesis [regulation]. Regulates arginine biosynthesis genes. The polypeptide is Arginine repressor (Parabacteroides distasonis (strain ATCC 8503 / DSM 20701 / CIP 104284 / JCM 5825 / NCTC 11152)).